The chain runs to 296 residues: Glycine--tRNA ligase alpha subunit (296 aa).

Belongs to the class-II aminoacyl-tRNA synthetase family. Tetramer of two alpha and two beta subunits.

It is found in the cytoplasm. It catalyses the reaction tRNA(Gly) + glycine + ATP = glycyl-tRNA(Gly) + AMP + diphosphate. This chain is Glycine--tRNA ligase alpha subunit, found in Synechococcus sp. (strain CC9605).